Consider the following 373-residue polypeptide: 3 beta-hydroxysteroid dehydrogenase/Delta 5--&gt;4-isomerase type 2 (373 aa).

The active-site Proton acceptor is Tyr155. Lys159 is an NAD(+) binding site. Residues 288–308 form a helical membrane-spanning segment; that stretch reads VALLYWLGFLLELVNFLLRPV.

Belongs to the 3-beta-HSD family. High levels in adrenal gland, kidney and male liver. Low levels in female liver.

The protein localises to the endoplasmic reticulum membrane. It is found in the mitochondrion membrane. It catalyses the reaction a 3beta-hydroxy-Delta(5)-steroid + NAD(+) = a 3-oxo-Delta(5)-steroid + NADH + H(+). The catalysed reaction is a 3-oxo-Delta(5)-steroid = a 3-oxo-Delta(4)-steroid. It carries out the reaction pregnenolone + NAD(+) = pregn-5-ene-3,20-dione + NADH + H(+). The enzyme catalyses pregn-5-ene-3,20-dione = progesterone. It catalyses the reaction 3beta-hydroxyandrost-5-en-17-one + NAD(+) = androst-5-ene-3,17-dione + NADH + H(+). The catalysed reaction is androst-5-ene-3,17-dione = androst-4-ene-3,17-dione. The protein operates within lipid metabolism; steroid biosynthesis. Its function is as follows. 3-beta-HSD is a bifunctional enzyme, that catalyzes the oxidative conversion of Delta(5)-ene-3-beta-hydroxy steroid, and the oxidative conversion of ketosteroids. The 3-beta-HSD enzymatic system plays a crucial role in the biosynthesis of all classes of hormonal steroids. The protein is 3 beta-hydroxysteroid dehydrogenase/Delta 5--&gt;4-isomerase type 2 (HSD3B2) of Mesocricetus auratus (Golden hamster).